A 403-amino-acid chain; its full sequence is L-cysteine:1D-myo-inositol 2-amino-2-deoxy-alpha-D-glucopyranoside ligase (403 aa).

Position 43 (Cys43) interacts with Zn(2+). Residues 43–46 (CGIT), Thr58, 81–83 (NVT), and Trp223 contribute to the L-cysteinyl-5'-AMP site. The 'HIGH' region motif lies at 45 to 55 (ITPYDATHLGH). Cys227 contacts Zn(2+). 245-247 (GAD) is an L-cysteinyl-5'-AMP binding site. His252 contacts Zn(2+). Val278 serves as a coordination point for L-cysteinyl-5'-AMP. Residues 284–288 (KMSKS) carry the 'KMSKS' region motif.

Belongs to the class-I aminoacyl-tRNA synthetase family. MshC subfamily. In terms of assembly, monomer. Zn(2+) serves as cofactor.

It catalyses the reaction 1D-myo-inositol 2-amino-2-deoxy-alpha-D-glucopyranoside + L-cysteine + ATP = 1D-myo-inositol 2-(L-cysteinylamino)-2-deoxy-alpha-D-glucopyranoside + AMP + diphosphate + H(+). In terms of biological role, catalyzes the ATP-dependent condensation of GlcN-Ins and L-cysteine to form L-Cys-GlcN-Ins. The protein is L-cysteine:1D-myo-inositol 2-amino-2-deoxy-alpha-D-glucopyranoside ligase of Acidothermus cellulolyticus (strain ATCC 43068 / DSM 8971 / 11B).